Consider the following 109-residue polypeptide: U4-lycotoxin-Ls1a (109 aa).

The signal sequence occupies residues 1–22 (MKVLVLFSVLFLTLFSYSSTEA). A propeptide spanning residues 23-44 (IDEFDSDAEDDMLSLMANEQVR) is cleaved from the precursor. The interval 45–88 (AKACTPRLHDCSHDRHSCCRGELFKDVCYCFYPEGEDKTEVCSC) is knottin domain. 4 cysteine pairs are disulfide-bonded: Cys-48–Cys-63, Cys-55–Cys-72, Cys-62–Cys-88, and Cys-74–Cys-86. Residues 89-108 (QQPKSHKYIEKVVDKAKTVV) are linear cationic cytotoxin domain.

It belongs to the neurotoxin 19 (CSTX) family. 05 (U4-Lctx) subfamily. Expressed by the venom gland.

It is found in the secreted. Enhances the high-affinity desensitization of human P2RX3 purinoceptors. In Lycosa singoriensis (Wolf spider), this protein is U4-lycotoxin-Ls1a.